Reading from the N-terminus, the 355-residue chain is Protein pelota homolog (355 aa).

The protein belongs to the eukaryotic release factor 1 family. Pelota subfamily. In terms of assembly, monomer. A divalent metal cation serves as cofactor.

Its subcellular location is the cytoplasm. Its function is as follows. May function in recognizing stalled ribosomes, interact with stem-loop structures in stalled mRNA molecules, and effect endonucleolytic cleavage of the mRNA. May play a role in the release non-functional ribosomes and degradation of damaged mRNAs. Has endoribonuclease activity. The sequence is that of Protein pelota homolog from Natronomonas pharaonis (strain ATCC 35678 / DSM 2160 / CIP 103997 / JCM 8858 / NBRC 14720 / NCIMB 2260 / Gabara) (Halobacterium pharaonis).